A 562-amino-acid chain; its full sequence is Tetratricopeptide repeat protein 34 (562 aa).

The disordered stretch occupies residues 1-30 (MLHKKPQRANENGISQRKKPSDQDNSSVKE). A compositionally biased stretch (basic and acidic residues) spans 19–30 (KPSDQDNSSVKE). 8 TPR repeats span residues 51–84 (DVSR…SSQR), 175–208 (KDSL…EPYN), 210–242 (EALS…DASY), 304–337 (AHFH…NAID), 388–421 (FQAA…SNNN), 423–455 (KYLR…HSSH), 461–494 (AEDY…EHAS), and 509–542 (AGIF…DENN).

The chain is Tetratricopeptide repeat protein 34 (ttc34) from Xenopus laevis (African clawed frog).